The chain runs to 284 residues: MEMO1 family protein SSO0066 (284 aa).

Belongs to the MEMO1 family.

The chain is MEMO1 family protein SSO0066 from Saccharolobus solfataricus (strain ATCC 35092 / DSM 1617 / JCM 11322 / P2) (Sulfolobus solfataricus).